A 230-amino-acid polypeptide reads, in one-letter code: Cytidylate kinase (230 aa).

Position 12–20 (12–20 (GPSGAGKGT)) interacts with ATP.

The protein belongs to the cytidylate kinase family. Type 1 subfamily.

It is found in the cytoplasm. It carries out the reaction CMP + ATP = CDP + ADP. The enzyme catalyses dCMP + ATP = dCDP + ADP. The chain is Cytidylate kinase from Shewanella putrefaciens (strain CN-32 / ATCC BAA-453).